The primary structure comprises 142 residues: Hemoglobin subunit alpha (142 aa).

The Globin domain maps to 2 to 142 (VLSPADKTNV…VSTVLTSKYR (141 aa)). Residue S4 is modified to Phosphoserine. K8 carries the post-translational modification N6-succinyllysine. T9 carries the phosphothreonine modification. K12 carries the N6-succinyllysine modification. Residue K17 is modified to N6-acetyllysine; alternate. K17 carries the post-translational modification N6-succinyllysine; alternate. Y25 is subject to Phosphotyrosine. S36 carries the post-translational modification Phosphoserine. At K41 the chain carries N6-succinyllysine. S50 carries the post-translational modification Phosphoserine. H59 lines the O2 pocket. H88 is a heme b binding site. A Phosphoserine modification is found at S103. A Phosphothreonine modification is found at T109. S125 and S132 each carry phosphoserine. T135 and T138 each carry phosphothreonine. S139 is modified (phosphoserine).

This sequence belongs to the globin family. As to quaternary structure, heterotetramer of two alpha chains and two beta chains. As to expression, red blood cells.

Its function is as follows. Involved in oxygen transport from the lung to the various peripheral tissues. Hemopressin acts as an antagonist peptide of the cannabinoid receptor CNR1. Hemopressin-binding efficiently blocks cannabinoid receptor CNR1 and subsequent signaling. The polypeptide is Hemoglobin subunit alpha (HBA) (Piliocolobus badius (Western red colobus)).